A 260-amino-acid chain; its full sequence is Taurine import ATP-binding protein TauB (260 aa).

The region spanning 6 to 235 is the ABC transporter domain; sequence AHQVSVVYAS…RYAAGESMRS (230 aa). 40–47 is a binding site for ATP; sequence GASGCGKS.

The protein belongs to the ABC transporter superfamily. Taurine importer (TC 3.A.1.17.1) family. As to quaternary structure, the complex is composed of two ATP-binding proteins (TauB), two transmembrane proteins (TauC) and a solute-binding protein (TauA).

Its subcellular location is the cell inner membrane. The catalysed reaction is taurine(out) + ATP + H2O = taurine(in) + ADP + phosphate + H(+). Functionally, part of the ABC transporter complex TauABC involved in taurine import. Responsible for energy coupling to the transport system. The polypeptide is Taurine import ATP-binding protein TauB (Burkholderia thailandensis (strain ATCC 700388 / DSM 13276 / CCUG 48851 / CIP 106301 / E264)).